Consider the following 675-residue polypeptide: Probable potassium transport system protein Kup (675 aa).

The next 12 helical transmembrane spans lie at 12–32 (LGMLITLGVVYGDIGTSPLYV), 55–75 (VSLIFWTLMLITTVKYVLVAL), 98–118 (WLIFVALIGGAALLADGTLTP), 143–163 (WLVPLSVTLILVSLFTIQVLG), 170–190 (SFGPMMLLWFIVIGGIGLLNI), 216–236 (MGIFILGSVFLATTGAEALYS), 249–269 (TWPFVYAMLILNYLGQGAWML), 296–316 (IAMIVLATVAAIIASQALITG), 345–365 (IYIGAINWLLCLVTLSIVWLF), 374–394 (AYGLAITLTMLMTTILLSQWV), 401–421 (FWSLALLAGFGLLETLFLVAS), and 428–448 (GGYLTLGLTLMIFLIMVVWFF).

This sequence belongs to the HAK/KUP transporter (TC 2.A.72) family.

It is found in the cell membrane. It carries out the reaction K(+)(in) + H(+)(in) = K(+)(out) + H(+)(out). Its function is as follows. Transport of potassium into the cell. Likely operates as a K(+):H(+) symporter. The protein is Probable potassium transport system protein Kup of Levilactobacillus brevis (strain ATCC 367 / BCRC 12310 / CIP 105137 / JCM 1170 / LMG 11437 / NCIMB 947 / NCTC 947) (Lactobacillus brevis).